The primary structure comprises 89 residues: Small ribosomal subunit protein bS20 (89 aa).

The protein belongs to the bacterial ribosomal protein bS20 family.

Functionally, binds directly to 16S ribosomal RNA. The chain is Small ribosomal subunit protein bS20 from Stenotrophomonas maltophilia (strain R551-3).